Reading from the N-terminus, the 433-residue chain is 3-phosphoshikimate 1-carboxyvinyltransferase (433 aa).

Positions 22, 23, and 27 each coordinate 3-phosphoshikimate. Lys-22 contributes to the phosphoenolpyruvate binding site. Phosphoenolpyruvate-binding residues include Gly-95 and Arg-123. Residues Ser-167, Gln-169, Asp-315, and Lys-342 each coordinate 3-phosphoshikimate. Residue Gln-169 coordinates phosphoenolpyruvate. Catalysis depends on Asp-315, which acts as the Proton acceptor. Residues Arg-346 and Arg-387 each contribute to the phosphoenolpyruvate site.

This sequence belongs to the EPSP synthase family. Monomer.

The protein localises to the cytoplasm. It carries out the reaction 3-phosphoshikimate + phosphoenolpyruvate = 5-O-(1-carboxyvinyl)-3-phosphoshikimate + phosphate. Its pathway is metabolic intermediate biosynthesis; chorismate biosynthesis; chorismate from D-erythrose 4-phosphate and phosphoenolpyruvate: step 6/7. In terms of biological role, catalyzes the transfer of the enolpyruvyl moiety of phosphoenolpyruvate (PEP) to the 5-hydroxyl of shikimate-3-phosphate (S3P) to produce enolpyruvyl shikimate-3-phosphate and inorganic phosphate. The polypeptide is 3-phosphoshikimate 1-carboxyvinyltransferase (Legionella pneumophila (strain Paris)).